The following is a 455-amino-acid chain: Bifunctional protein GlmU (455 aa).

Residues 1–226 are pyrophosphorylase; it reads MSLDIVILAA…AMEVQGANDR (226 aa). UDP-N-acetyl-alpha-D-glucosamine is bound by residues 8-11, lysine 22, glutamine 73, 78-79, 99-101, glycine 136, glutamate 151, asparagine 166, and asparagine 224; these read LAAG, GT, and YGD. Aspartate 101 lines the Mg(2+) pocket. Asparagine 224 is a Mg(2+) binding site. The linker stretch occupies residues 227–247; that stretch reads RQLSELERHYQLREGRRLMAQ. The interval 248–455 is N-acetyltransferase; that stretch reads GVTLRDPARF…WKRPEKIKKS (208 aa). Residues arginine 330 and lysine 348 each contribute to the UDP-N-acetyl-alpha-D-glucosamine site. Residue histidine 360 is the Proton acceptor of the active site. Residues tyrosine 363 and asparagine 374 each coordinate UDP-N-acetyl-alpha-D-glucosamine. Residues alanine 377, 383–384, serine 402, alanine 420, and arginine 437 each bind acetyl-CoA; that span reads NY.

It in the N-terminal section; belongs to the N-acetylglucosamine-1-phosphate uridyltransferase family. This sequence in the C-terminal section; belongs to the transferase hexapeptide repeat family. Homotrimer. Mg(2+) serves as cofactor.

The protein localises to the cytoplasm. The catalysed reaction is alpha-D-glucosamine 1-phosphate + acetyl-CoA = N-acetyl-alpha-D-glucosamine 1-phosphate + CoA + H(+). It catalyses the reaction N-acetyl-alpha-D-glucosamine 1-phosphate + UTP + H(+) = UDP-N-acetyl-alpha-D-glucosamine + diphosphate. It functions in the pathway nucleotide-sugar biosynthesis; UDP-N-acetyl-alpha-D-glucosamine biosynthesis; N-acetyl-alpha-D-glucosamine 1-phosphate from alpha-D-glucosamine 6-phosphate (route II): step 2/2. It participates in nucleotide-sugar biosynthesis; UDP-N-acetyl-alpha-D-glucosamine biosynthesis; UDP-N-acetyl-alpha-D-glucosamine from N-acetyl-alpha-D-glucosamine 1-phosphate: step 1/1. Its pathway is bacterial outer membrane biogenesis; LPS lipid A biosynthesis. Its function is as follows. Catalyzes the last two sequential reactions in the de novo biosynthetic pathway for UDP-N-acetylglucosamine (UDP-GlcNAc). The C-terminal domain catalyzes the transfer of acetyl group from acetyl coenzyme A to glucosamine-1-phosphate (GlcN-1-P) to produce N-acetylglucosamine-1-phosphate (GlcNAc-1-P), which is converted into UDP-GlcNAc by the transfer of uridine 5-monophosphate (from uridine 5-triphosphate), a reaction catalyzed by the N-terminal domain. This Pseudomonas putida (strain ATCC 47054 / DSM 6125 / CFBP 8728 / NCIMB 11950 / KT2440) protein is Bifunctional protein GlmU.